The sequence spans 205 residues: Thiamine-phosphate synthase (205 aa).

Residues 34–38 (QLRCK) and asparagine 66 each bind 4-amino-2-methyl-5-(diphosphooxymethyl)pyrimidine. Aspartate 67 and aspartate 86 together coordinate Mg(2+). Serine 105 provides a ligand contact to 4-amino-2-methyl-5-(diphosphooxymethyl)pyrimidine. 131–133 (TTT) serves as a coordination point for 2-[(2R,5Z)-2-carboxy-4-methylthiazol-5(2H)-ylidene]ethyl phosphate. Lysine 134 serves as a coordination point for 4-amino-2-methyl-5-(diphosphooxymethyl)pyrimidine. Residue glycine 163 participates in 2-[(2R,5Z)-2-carboxy-4-methylthiazol-5(2H)-ylidene]ethyl phosphate binding.

This sequence belongs to the thiamine-phosphate synthase family. Mg(2+) serves as cofactor.

It carries out the reaction 2-[(2R,5Z)-2-carboxy-4-methylthiazol-5(2H)-ylidene]ethyl phosphate + 4-amino-2-methyl-5-(diphosphooxymethyl)pyrimidine + 2 H(+) = thiamine phosphate + CO2 + diphosphate. It catalyses the reaction 2-(2-carboxy-4-methylthiazol-5-yl)ethyl phosphate + 4-amino-2-methyl-5-(diphosphooxymethyl)pyrimidine + 2 H(+) = thiamine phosphate + CO2 + diphosphate. The enzyme catalyses 4-methyl-5-(2-phosphooxyethyl)-thiazole + 4-amino-2-methyl-5-(diphosphooxymethyl)pyrimidine + H(+) = thiamine phosphate + diphosphate. The protein operates within cofactor biosynthesis; thiamine diphosphate biosynthesis; thiamine phosphate from 4-amino-2-methyl-5-diphosphomethylpyrimidine and 4-methyl-5-(2-phosphoethyl)-thiazole: step 1/1. Condenses 4-methyl-5-(beta-hydroxyethyl)thiazole monophosphate (THZ-P) and 2-methyl-4-amino-5-hydroxymethyl pyrimidine pyrophosphate (HMP-PP) to form thiamine monophosphate (TMP). The sequence is that of Thiamine-phosphate synthase from Neisseria meningitidis serogroup A / serotype 4A (strain DSM 15465 / Z2491).